The primary structure comprises 400 residues: Phosphoglycerate kinase (400 aa).

Residues 21-23 (DLN), arginine 36, 59-62 (HLGR), arginine 114, and arginine 147 contribute to the substrate site. Residues lysine 202, glutamate 329, and 355–358 (GGDT) each bind ATP.

The protein belongs to the phosphoglycerate kinase family. As to quaternary structure, monomer.

The protein localises to the cytoplasm. The catalysed reaction is (2R)-3-phosphoglycerate + ATP = (2R)-3-phospho-glyceroyl phosphate + ADP. The protein operates within carbohydrate degradation; glycolysis; pyruvate from D-glyceraldehyde 3-phosphate: step 2/5. The chain is Phosphoglycerate kinase from Psychrobacter cryohalolentis (strain ATCC BAA-1226 / DSM 17306 / VKM B-2378 / K5).